The following is a 299-amino-acid chain: Ethylmalonyl-CoA decarboxylase (299 aa).

K209 bears the N6-acetyllysine; alternate mark. K209 is subject to N6-succinyllysine; alternate. K293 is subject to N6-succinyllysine.

The protein belongs to the enoyl-CoA hydratase/isomerase family.

It localises to the cytoplasm. Its subcellular location is the cytosol. It carries out the reaction (2S)-ethylmalonyl-CoA + H(+) = butanoyl-CoA + CO2. It catalyses the reaction (S)-methylmalonyl-CoA + H(+) = propanoyl-CoA + CO2. The catalysed reaction is (2R)-ethylmalonyl-CoA + H(+) = butanoyl-CoA + CO2. Functionally, decarboxylates ethylmalonyl-CoA, a potentially toxic metabolite, to form butyryl-CoA, suggesting it might be involved in metabolite proofreading. Acts preferentially on (S)-ethylmalonyl-CoA but also has some activity on the (R)-isomer. Also has methylmalonyl-CoA decarboxylase activity at lower level. In Rattus norvegicus (Rat), this protein is Ethylmalonyl-CoA decarboxylase (Echdc1).